The chain runs to 190 residues: MSLVTALNGLDLFLVGLMGSGKTTIGKLLAESLGYTYVDTDSLIENVTGRSIPEIFASDGEAGFRQIETQVLEEVASYRRLVVATGGGIVIRPENWSYLQQGLVIWLDVPIPELLRRLEGDQNRPLLQTEAPATTLQALWEQRRDRYAQADLRIAIEASEDPEVTMQRILEVIPSVLKNSADSSPAEIET.

Position 19-24 (19-24 (GSGKTT)) interacts with ATP. Threonine 23 provides a ligand contact to Mg(2+). Substrate contacts are provided by aspartate 41, arginine 65, and glycine 87. ATP is bound at residue arginine 124. Substrate is bound at residue arginine 143.

This sequence belongs to the shikimate kinase family. Monomer. Mg(2+) serves as cofactor.

It localises to the cytoplasm. It catalyses the reaction shikimate + ATP = 3-phosphoshikimate + ADP + H(+). Its pathway is metabolic intermediate biosynthesis; chorismate biosynthesis; chorismate from D-erythrose 4-phosphate and phosphoenolpyruvate: step 5/7. Its function is as follows. Catalyzes the specific phosphorylation of the 3-hydroxyl group of shikimic acid using ATP as a cosubstrate. In Synechococcus sp. (strain ATCC 27144 / PCC 6301 / SAUG 1402/1) (Anacystis nidulans), this protein is Shikimate kinase.